The sequence spans 326 residues: Regulation of nuclear pre-mRNA domain-containing protein 1B (326 aa).

N-acetylserine is present on serine 2. Positions 2 to 133 (SSFSESALEK…QLKLSMEDSK (132 aa)) constitute a CID domain. Residues 128–144 (SMEDSKSPPPKAAEEKK) are compositionally biased toward basic and acidic residues. The disordered stretch occupies residues 128 to 148 (SMEDSKSPPPKAAEEKKSLKR). Phosphoserine occurs at positions 132 and 134. Tyrosine 161 carries the post-translational modification Phosphotyrosine. Phosphoserine is present on residues serine 166 and serine 299.

This sequence belongs to the UPF0400 (RTT103) family. In terms of assembly, homodimer. May form a heterodimer with RPRD1A. Associates with RPAP2. Associates with the RNA polymerase II complex. Widely expressed in the adult with highest levels in liver, colon, prostate and uterus and lowest levels in heart and kidney. Not detected in rectum.

It is found in the nucleus. Its function is as follows. Interacts with phosphorylated C-terminal heptapeptide repeat domain (CTD) of the largest RNA polymerase II subunit POLR2A, and participates in dephosphorylation of the CTD by RPAP2. Transcriptional regulator which enhances expression of CCND1. Promotes binding of RNA polymerase II to the CCDN1 promoter and to the termination region before the poly-A site but decreases its binding after the poly-A site. Prevents RNA polymerase II from reading through the 3' end termination site and may allow it to be recruited back to the promoter through promotion of the formation of a chromatin loop. Also enhances the transcription of a number of other cell cycle-related genes including CDK2, CDK4, CDK6 and cyclin-E but not CDKN1A, CDKN1B or cyclin-A. Promotes cell proliferation. This is Regulation of nuclear pre-mRNA domain-containing protein 1B (Rprd1b) from Mus musculus (Mouse).